The following is a 1779-amino-acid chain: 6-methylsalicylic acid synthase (1779 aa).

A compositionally biased stretch (polar residues) spans 1–11 (MSASRSSTKFS). A disordered region spans residues 1–40 (MSASRSSTKFSTPAEGSDNGKEFTTPATSTEGHEVPDRPG). A compositionally biased stretch (basic and acidic residues) spans 31–40 (EGHEVPDRPG). One can recognise a Ketosynthase family 3 (KS3) domain in the interval 43-472 (LADVAIIGMA…GTVSHAVLEA (430 aa)). Active-site for beta-ketoacyl synthase activity residues include C215, H350, and H392. Residues 586–883 (WIFSGHGAQW…TPTMVRRQPA (298 aa)) form a malonyl-CoA:ACP transacylase (MAT) domain region. The active-site For acyl/malonyl transferase activity is S672. The interval 942-1218 (THDPAANNLL…SFAGLEGESF (277 aa)) is product template (PT) domain. Residues 948-1064 (NNLLGKRIAL…AAVGAANVVP (117 aa)) are N-terminal hotdog fold. One can recognise a PKS/mFAS DH domain in the interval 948-1219 (NNLLGKRIAL…FAGLEGESFS (272 aa)). H980 (proton acceptor; for dehydratase activity) is an active-site residue. Residues 1079-1219 (PQKLADSFSI…FAGLEGESFS (141 aa)) are C-terminal hotdog fold. D1138 acts as the Proton donor; for dehydratase activity in catalysis. The Carrier domain maps to 1703–1777 (QHLRDVINGC…HLVKHFTKEL (75 aa)). S1737 is subject to O-(pantetheine 4'-phosphoryl)serine.

The enzyme catalyses 3 malonyl-CoA + acetyl-CoA + NADPH + 3 H(+) = 6-methylsalicylate + 3 CO2 + NADP(+) + 4 CoA + H2O. Its pathway is secondary metabolite biosynthesis; terpenoid biosynthesis. Non-reducing polyketide synthase; part of the gene cluster that mediates the biosynthesis of yanuthone D, a fungal isoprenoid epoxycyclohexenone that acts as an antibiotic against fungi and bacteria. The first step of the pathway is the synthesis of 6-methylsalicylic acid (6-MSA) by the polyketide synthase yanA. 6-MSA is then converted to m-cresol by the decarboxylase yanB. The cytochrome P450 monooxygenase yanC then catalyzes the oxidation of m-cresol to toluquinol. Epoxidation of toluquinol is then performed by the short chain dehydrogenase yanD, with the help of yanE, and a further prenylation by yanG leads to 7-deacetoxyyanuthone A. The next step is the hydroxylation of C-22 of 7-deacetoxyyanuthone A by the cytochrome P450 monooxygenase yanH to yield 22-deacetylyanuthone A. O-Mevalon transferase yanI then attaches mevalon to the hydroxyl group of 22-deacetylyanuthone A to produce yanuthone E. Finally, the FAD-dependent monooxygenase yanF oxidizes the hydroxyl group at C15 of yanuthone E to form yanuthone D. Furthermore, several branching points in the pathway lead to the production of yanuthones F and G from 7-deacetoxyyanuthone A; yanuthones H and I from 22-deacetylyanuthone A; and yanuthone J from yanuthone E. This Aspergillus niger (strain ATCC 1015 / CBS 113.46 / FGSC A1144 / LSHB Ac4 / NCTC 3858a / NRRL 328 / USDA 3528.7) protein is 6-methylsalicylic acid synthase.